The sequence spans 251 residues: Probable ATP-dependent transporter ycf16 (251 aa).

Positions 8–250 (LEIKNLKACI…ELESKGYEWL (243 aa)) constitute an ABC transporter domain. 40 to 47 (GPNGSGKS) contacts ATP.

It belongs to the ABC transporter superfamily. Ycf16 family.

It localises to the plastid. Its subcellular location is the chloroplast. This is Probable ATP-dependent transporter ycf16 (ycf16) from Trieres chinensis (Marine centric diatom).